A 121-amino-acid polypeptide reads, in one-letter code: Protein TusC (121 aa).

This sequence belongs to the DsrF/TusC family. In terms of assembly, heterohexamer, formed by a dimer of trimers. The hexameric TusBCD complex contains 2 copies each of TusB, TusC and TusD. The TusBCD complex interacts with TusE.

The protein localises to the cytoplasm. In terms of biological role, part of a sulfur-relay system required for 2-thiolation of 5-methylaminomethyl-2-thiouridine (mnm(5)s(2)U) at tRNA wobble positions. The chain is Protein TusC from Yersinia pestis bv. Antiqua (strain Antiqua).